We begin with the raw amino-acid sequence, 138 residues long: Large ribosomal subunit protein bL17 (138 aa).

The protein belongs to the bacterial ribosomal protein bL17 family. In terms of assembly, part of the 50S ribosomal subunit. Contacts protein L32.

In Buchnera aphidicola subsp. Schizaphis graminum (strain Sg), this protein is Large ribosomal subunit protein bL17.